The following is a 345-amino-acid chain: NADH-quinone oxidoreductase subunit H (345 aa).

Transmembrane regions (helical) follow at residues 15 to 35 (MLLQ…FMVY), 82 to 102 (FVYF…FVVI), 115 to 135 (VGIL…IMGG), 161 to 181 (LGLI…TAIV), 190 to 210 (LLNW…VSAL), 240 to 262 (YLLF…SLLF), 278 to 298 (WWMV…KAIV), and 309 to 329 (IGWK…AILA).

It belongs to the complex I subunit 1 family. In terms of assembly, NDH-1 is composed of at least 14 different subunits, Nqo1 to Nqo14. The complex has a L-shaped structure, with the hydrophobic arm (subunits Nqo7, Nqo8, Nqo10 to Nqo14) embedded in the inner membrane and the hydrophilic peripheral arm (subunits Nqo1 to Nqo6, Nqo9) protruding into the bacterial cytoplasm. The hydrophilic domain contains all the redox centers. NADH-quinone oxidoreductase forms a supercomplex with ubiquinol-cytochrome c reductase complex (complex III or cytochrome b-c1 complex) and cytochrome c oxidase (complex IV), which stabilizes the NADH-quinone oxidoreductase complex.

Its subcellular location is the cell inner membrane. It carries out the reaction a quinone + NADH + 5 H(+)(in) = a quinol + NAD(+) + 4 H(+)(out). NDH-1 shuttles electrons from NADH, via FMN and iron-sulfur (Fe-S) centers, to quinones in the respiratory chain. The immediate electron acceptor for the enzyme in this species is believed to be ubiquinone. Couples the redox reaction to proton translocation (for every two electrons transferred, four hydrogen ions are translocated across the cytoplasmic membrane), and thus conserves the redox energy in a proton gradient. This subunit may bind ubiquinone. The chain is NADH-quinone oxidoreductase subunit H from Paracoccus denitrificans (strain Pd 1222).